The chain runs to 93 residues: UPF0728 protein C10orf53 (93 aa).

This sequence belongs to the UPF0728 family.

The chain is UPF0728 protein C10orf53 (C10orf53) from Homo sapiens (Human).